Here is a 117-residue protein sequence, read N- to C-terminus: Ig heavy chain V region UPC10 (117 aa).

In terms of domain architecture, Ig-like spans 1–116; it reads EVKLLESGGG…WGQVTTLTVS (116 aa).

The protein is Ig heavy chain V region UPC10 of Mus musculus (Mouse).